Reading from the N-terminus, the 165-residue chain is Transcription antitermination protein NusB (165 aa).

The protein belongs to the NusB family.

In terms of biological role, involved in transcription antitermination. Required for transcription of ribosomal RNA (rRNA) genes. Binds specifically to the boxA antiterminator sequence of the ribosomal RNA (rrn) operons. This is Transcription antitermination protein NusB from Bradyrhizobium diazoefficiens (strain JCM 10833 / BCRC 13528 / IAM 13628 / NBRC 14792 / USDA 110).